Reading from the N-terminus, the 279-residue chain is Cytochrome c1 (279 aa).

The first 21 residues, Met-1–Ala-21, serve as a signal peptide directing secretion. Heme c contacts are provided by Cys-55, Cys-58, His-59, and Met-204. Residues Met-248–Thr-266 form a helical membrane-spanning segment.

The main subunits of complex b-c1 are: cytochrome b, cytochrome c1 and the Rieske protein. In terms of processing, binds 1 heme c group covalently per subunit.

It localises to the cell membrane. Component of the ubiquinol-cytochrome c reductase complex (complex III or cytochrome b-c1 complex), which is a respiratory chain that generates an electrochemical potential coupled to ATP synthesis. c1 functions as an electron donor to cytochrome c. This chain is Cytochrome c1 (petC), found in Rhodobacter capsulatus (strain ATCC BAA-309 / NBRC 16581 / SB1003).